A 187-amino-acid polypeptide reads, in one-letter code: Adenine phosphoribosyltransferase (187 aa).

Residue 133 to 137 coordinates AMP; it reads ATGGS.

It belongs to the purine/pyrimidine phosphoribosyltransferase family. Homodimer. The cofactor is Mg(2+).

It localises to the cytoplasm. Its subcellular location is the nucleus. The catalysed reaction is AMP + diphosphate = 5-phospho-alpha-D-ribose 1-diphosphate + adenine. Its pathway is purine metabolism; AMP biosynthesis via salvage pathway; AMP from adenine: step 1/1. Functionally, catalyzes a salvage reaction resulting in the formation of AMP, that is energically less costly than de novo synthesis. The polypeptide is Adenine phosphoribosyltransferase (APT1) (Eremothecium gossypii (strain ATCC 10895 / CBS 109.51 / FGSC 9923 / NRRL Y-1056) (Yeast)).